The following is a 543-amino-acid chain: Secreted effector protein SptP (543 aa).

Residues 35-139 (TDKAYVAPEK…FINLIKNKDN (105 aa)) are chaperone-binding. One can recognise a Bacterial Rho-GAP domain in the interval 162–293 (DVGAESKQPL…TAELEKIKAG (132 aa)). The Tyrosine-protein phosphatase domain maps to 315-543 (IPINQQTQVK…QAQLLMTTAS (229 aa)). Cysteine 481 acts as the Phosphocysteine intermediate in catalysis.

In terms of assembly, forms a complex with SicP.

It is found in the secreted. It localises to the host cytoplasm. It carries out the reaction O-phospho-L-tyrosyl-[protein] + H2O = L-tyrosyl-[protein] + phosphate. In terms of biological role, effector proteins function to alter host cell physiology and promote bacterial survival in host tissues. This protein includes tyrosine phosphatase and GTPase activating protein (GAP) activities. After bacterial internalization, GAP mediates the reversal of the cytoskeletal changes induced by SopE. This function is independent of its tyrosine phosphatase activity, which remains unclear. The sequence is that of Secreted effector protein SptP (sptP) from Salmonella typhi.